Consider the following 366-residue polypeptide: Protein RecA (366 aa).

77–84 is a binding site for ATP; that stretch reads GPESSGKT. The disordered stretch occupies residues 346-366; the sequence is IGGPGGEDDDAGGAAGVGDEA.

The protein belongs to the RecA family.

The protein resides in the cytoplasm. In terms of biological role, can catalyze the hydrolysis of ATP in the presence of single-stranded DNA, the ATP-dependent uptake of single-stranded DNA by duplex DNA, and the ATP-dependent hybridization of homologous single-stranded DNAs. It interacts with LexA causing its activation and leading to its autocatalytic cleavage. This is Protein RecA from Rhodospirillum rubrum (strain ATCC 11170 / ATH 1.1.1 / DSM 467 / LMG 4362 / NCIMB 8255 / S1).